The primary structure comprises 799 residues: MMLNLVVADGPRQLSAREKAAKLKKSGLSFAQRKALREEEKKNAWKKEQGGITTTIEDRMKRREQDNPPVRPKPYDKPYEKKPYEKKPFEKKPYEKKSYDKPVASKPVEETDEEKYQRLMEGGKRPEKERWVPQRNFRNRRDMEKAGKDQSQDATPKHHDRDVIGTREDGSLIRRIREKTGAKGGIKGTYVSSIFSEKKEDRIAGEDVQMEDEEEEEAENNAESSNAALKDSTTFSGLGCSQRLVDALVGMQLAKPTKIQRATIPRLIQRERDLFVQAQTGSGKTLAFVLPVLERIMSCDDVSRETGLFAVILTPTRELTTQIYSVLETLCRKACPWIVPGIVIGGEKKKSEKARIRKGVNILVATPGRLADHFDNTEALDLSQVRWVVLDEGDRLMELGFEETITKILRTIEWKSVLRGENYLKDIPKNLKPLPSRRVTVLCSATMKGGVTELGKSTLKDADWVSNDSVEDALAETSVETFSAPSQLVQEWVVVPAKLRLVTLLGALRGDILQSSEKTNTKVIVFLSCSDSVDFHFDVLSRDGSQINKMDTAKTAPLLLDDVSTSVYKLHGSLSQQARTATLASFAKNSTPSILLCTDVASRGLDLPKITHVIEYDPPFSIEDHLHRVGRTARAGQDGRALLFLLPGAEEGYVEKLKQSQQMKKTTYENILAAGFGGKGWDFAATNYHLDVERWVLGDETALDRARRGFTSHIRAYATHIAAEKDMFNVRMLHLGHLAKSFALREAPGKLGKKKDPEKIKVNKDGSLDETQARKKMLDRSRKHVYNSGESAMGGYVLE.

2 disordered regions span residues 34–177 (KALR…RRIR) and 201–229 (DRIAGEDVQMEDEEEEEAENNAESSNAAL). 5 stretches are compositionally biased toward basic and acidic residues: residues 35–49 (ALREEEKKNAWKKEQ), 56–66 (IEDRMKRREQD), 73–100 (KPYDKPYEKKPYEKKPFEKKPYEKKSYD), 114–132 (EKYQRLMEGGKRPEKERWV), and 139–172 (NRRDMEKAGKDQSQDATPKHHDRDVIGTREDGSL). The segment covering 208-220 (VQMEDEEEEEAEN) has biased composition (acidic residues). The Q motif motif lies at 233–261 (TTFSGLGCSQRLVDALVGMQLAKPTKIQR). The Helicase ATP-binding domain maps to 265–465 (PRLIQRERDL…KSTLKDADWV (201 aa)). ATP-binding positions include 278–285 (AQTGSGKT) and 306–313 (TGLFAVIL). Positions 391 to 394 (DEGD) match the DEAD box motif. A Helicase C-terminal domain is found at 511–679 (DILQSSEKTN…NILAAGFGGK (169 aa)). Positions 750-799 (KLGKKKDPEKIKVNKDGSLDETQARKKMLDRSRKHVYNSGESAMGGYVLE) are disordered. Positions 754–780 (KKDPEKIKVNKDGSLDETQARKKMLDR) are enriched in basic and acidic residues.

It belongs to the DEAD box helicase family. DDX31/DBP7 subfamily.

The protein localises to the nucleus. Its subcellular location is the nucleolus. The catalysed reaction is ATP + H2O = ADP + phosphate + H(+). Its function is as follows. ATP-binding RNA helicase involved in the biogenesis of 60S ribosomal subunits and is required for the normal formation of 25S and 5.8S rRNAs. The sequence is that of ATP-dependent RNA helicase DBP7 (DBP7) from Yarrowia lipolytica (strain CLIB 122 / E 150) (Yeast).